The primary structure comprises 713 residues: Methionine--tRNA ligase (713 aa).

The 'HIGH' region motif lies at 31–41; sequence PYANGSIHLGH. Residues Cys-162, Cys-165, Cys-175, and Cys-178 each contribute to the Zn(2+) site. The short motif at 348-352 is the 'KMSKS' region element; the sequence is KMSKS. Lys-351 lines the ATP pocket. Positions 609–713 constitute a tRNA-binding domain; sequence DFAKIDLRIV…DGAKAGMRVK (105 aa).

This sequence belongs to the class-I aminoacyl-tRNA synthetase family. MetG type 1 subfamily. As to quaternary structure, homodimer. It depends on Zn(2+) as a cofactor.

It is found in the cytoplasm. It carries out the reaction tRNA(Met) + L-methionine + ATP = L-methionyl-tRNA(Met) + AMP + diphosphate. Functionally, is required not only for elongation of protein synthesis but also for the initiation of all mRNA translation through initiator tRNA(fMet) aminoacylation. This is Methionine--tRNA ligase from Colwellia psychrerythraea (strain 34H / ATCC BAA-681) (Vibrio psychroerythus).